A 240-amino-acid polypeptide reads, in one-letter code: Probable transcriptional regulatory protein MADE_1004275 (240 aa).

Belongs to the TACO1 family.

It localises to the cytoplasm. The polypeptide is Probable transcriptional regulatory protein MADE_1004275 (Alteromonas mediterranea (strain DSM 17117 / CIP 110805 / LMG 28347 / Deep ecotype)).